The primary structure comprises 95 residues: 1,2-phenylacetyl-CoA epoxidase, subunit B (95 aa).

As to quaternary structure, homotrimer. Forms a stable heterodimer with PaaC. Probably forms an oligomer with PaaAC.

Its pathway is aromatic compound metabolism; phenylacetate degradation. In terms of biological role, component of 1,2-phenylacetyl-CoA epoxidase multicomponent enzyme system which catalyzes the reduction of phenylacetyl-CoA (PA-CoA) to form 1,2-epoxyphenylacetyl-CoA. The subunit B may play a regulatory role or be directly involved in electron transport. The protein is 1,2-phenylacetyl-CoA epoxidase, subunit B (paaB) of Escherichia coli (strain K12).